Reading from the N-terminus, the 612-residue chain is Probable cytosolic Fe-S cluster assembly factor SJAG_02895 (612 aa).

An ATP-binding site is contributed by 13–20 (GKGGVGKS). The [4Fe-4S] cluster site is built by cysteine 200 and cysteine 203. 7 WD repeats span residues 287-326 (GHRG…LIHV), 330-370 (YHTR…WECV), 375-414 (GHEN…EFDC), 420-459 (EHTQ…WVQT), 464-503 (SHTS…EDAA), 528-566 (TFTE…STWH), and 574-612 (AHDV…DQTA).

It in the N-terminal section; belongs to the Mrp/NBP35 ATP-binding proteins family. NUBP2/CFD1 subfamily. This sequence in the C-terminal section; belongs to the WD repeat CIA1 family. As to quaternary structure, heterotetramer of 2 nbp35 and 2 SJAG_02895 chains. It depends on [4Fe-4S] cluster as a cofactor.

The protein localises to the cytoplasm. It is found in the nucleus. Its function is as follows. Fusion protein of two essential components of the cytosolic iron-sulfur (Fe/S) protein assembly (CIA) machinery. Required for maturation of extramitochondrial Fe-S proteins. May form a heterotetramer with nubp35, functioning as a Fe-S scaffold complex, mediating the de novo assembly of an Fe-S cluster and its transfer to target apoproteins. This Schizosaccharomyces japonicus (strain yFS275 / FY16936) (Fission yeast) protein is Probable cytosolic Fe-S cluster assembly factor SJAG_02895.